The sequence spans 272 residues: Putative pyruvate, phosphate dikinase regulatory protein (272 aa).

An ADP-binding site is contributed by 151 to 158 (GISRTSKT).

It belongs to the pyruvate, phosphate/water dikinase regulatory protein family. PDRP subfamily.

It catalyses the reaction N(tele)-phospho-L-histidyl/L-threonyl-[pyruvate, phosphate dikinase] + ADP = N(tele)-phospho-L-histidyl/O-phospho-L-threonyl-[pyruvate, phosphate dikinase] + AMP + H(+). The catalysed reaction is N(tele)-phospho-L-histidyl/O-phospho-L-threonyl-[pyruvate, phosphate dikinase] + phosphate + H(+) = N(tele)-phospho-L-histidyl/L-threonyl-[pyruvate, phosphate dikinase] + diphosphate. Bifunctional serine/threonine kinase and phosphorylase involved in the regulation of the pyruvate, phosphate dikinase (PPDK) by catalyzing its phosphorylation/dephosphorylation. The polypeptide is Putative pyruvate, phosphate dikinase regulatory protein (Staphylococcus aureus (strain USA300)).